Consider the following 389-residue polypeptide: Shewanella-like protein phosphatase 1 (389 aa).

The transit peptide at 1-53 (MASLYLNSLLPLPPSHPQKLLEPSSSSLLSTSNGNELALKPIVINGDPPTFVS) directs the protein to the chloroplast. Residues Asp64, His66, Asp102, and Asn137 each contribute to the Mn(2+) site. His138 serves as the catalytic Proton donor. 2 residues coordinate Mn(2+): His242 and His314.

Belongs to the metallophosphoesterase superfamily. SLP family. The cofactor is Mn(2+). In terms of tissue distribution, expressed in rosettes leaves, shoots and flowers (at protein level).

It localises to the plastid. The protein localises to the chloroplast. Functionally, shows phosphatase activity, hydrolyzing the artificial substrate para-nitrophenylphosphate (pNPP) in vitro. The polypeptide is Shewanella-like protein phosphatase 1 (Arabidopsis thaliana (Mouse-ear cress)).